We begin with the raw amino-acid sequence, 757 residues long: MMPISATIDSKSFPFDTTPTYASLDAYQMDQRALPTSPFNGAVKRDQMFDQLLLDPPSPTTSRFDGMWPTSNAQANASSSWTPSAGMPDAFDGVGNSLVNDASSDWSDFLMPLLATVATDFSSGSATKSEPSTCSSSTDFSMSSTADASTAPQHSSSGDSSMSSGLPVSTATCTAMPAAQNHQVTTQDASVQPKLEKQCQPPSHNVNQQNAFASSNQDNNCPQVHIIASWLDQDADRNTGHRQHNRHQKQQNLPQGQSCTNSGSSSRQVTRPNSPNHQRSRPQLRSRSSTGNGYTWPSVDPQVFLWAAFMMNGFQQAQAGTATASPMSDYSAMEYDDEPQAQHGYHATENCNVDDAMDGTGDFCKKEDRSQSADCGLLPRPPSNSPEPHPYPLDPMAAFARAAAESMAMSYSWPMPMPTNMMELQHNPARSNSTFGRVSQRHHQPPPSHRQRSRTSASSISNTNAAHRKHKVDAVRQSAVRSRRQSFVEPRQCASQSPSSPSESTAATDAKLTKPRAQSAGRSHVTERLPHLHTLSYSTPPDTSSSVSALTSTTTTTVSTGASSVASSISGPSSASSGIGNASGSLSFTITDKIVLKPRPGSGDEELAYPCATNSLLEMQNNEGPIVDAQQQAEEAVEKVQNLFPSDLYAPRFTRRGTCGREGWCSLCPQGEWYSMKRSQYLYHMQFDHGISNLTRRLFHPPQTLRVWNDAVSKTDGLCHHCNKWIPICFGPQRKRDFKAWFKHARKCHRDDTGCPI.

Disordered stretches follow at residues 122 to 169, 181 to 218, 237 to 295, 372 to 393, and 422 to 582; these read SSGS…LPVS, NHQVTTQDASVQPKLEKQCQPPSHNVNQQNAFASSNQD, RNTG…NGYT, SADCGLLPRPPSNSPEPHPYPL, and MELQ…IGNA. Positions 125–165 are enriched in low complexity; it reads SATKSEPSTCSSSTDFSMSSTADASTAPQHSSSGDSSMSSG. Composition is skewed to polar residues over residues 181-190 and 200-218; these read NHQVTTQDAS and QPPSHNVNQQNAFASSNQD. Residues 240-249 are compositionally biased toward basic residues; it reads GHRQHNRHQK. The segment covering 253 to 277 has biased composition (polar residues); that stretch reads LPQGQSCTNSGSSSRQVTRPNSPNH. Over residues 379 to 393 the composition is skewed to pro residues; it reads PRPPSNSPEPHPYPL. The segment covering 428–437 has biased composition (polar residues); the sequence is PARSNSTFGR. A compositionally biased stretch (basic residues) spans 439-453; it reads SQRHHQPPPSHRQRS. Low complexity-rich tracts occupy residues 454–465, 494–510, and 543–582; these read RTSASSISNTNA, ASQSPSSPSESTAATDA, and TSSSVSALTSTTTTTVSTGASSVASSISGPSSASSGIGNA. A C2H2-type 1 degenerate zinc finger spans residues 661–692; the sequence is REGWCSLCPQGEWYSMKRSQYLYHMQFDHGIS. The C2H2-type 2; degenerate zinc finger occupies 717–750; that stretch reads GLCHHCNKWIPICFGPQRKRDFKAWFKHARKCHR.

The protein localises to the nucleus. Transcription factor; part of the gene cluster that mediates the biosynthesis of the glycolipid biosurfactant ustilagic acid (UA). UA is a secreted cellobiose glycolipid that is toxic for many microorganisms and confers biocontrol activity to U.maydis. Recognizes and binds to the specific 5'-T/G-G/T-C-G-C-A-T-A/T-C/T-C/T-G/A-3' upstream activating sequence found in all promoters of the UA biosynthesis genes. The sequence is that of Transcription regulator rua1 from Mycosarcoma maydis (Corn smut fungus).